The chain runs to 122 residues: Large ribosomal subunit protein uL18 (122 aa).

It belongs to the universal ribosomal protein uL18 family. In terms of assembly, part of the 50S ribosomal subunit; part of the 5S rRNA/L5/L18/L25 subcomplex. Contacts the 5S and 23S rRNAs.

In terms of biological role, this is one of the proteins that bind and probably mediate the attachment of the 5S RNA into the large ribosomal subunit, where it forms part of the central protuberance. The polypeptide is Large ribosomal subunit protein uL18 (Desulfatibacillum aliphaticivorans).